Reading from the N-terminus, the 747-residue chain is Endopolyphosphatase (747 aa).

Residue M1 is a topological domain, cytoplasmic. A helical; Signal-anchor for type II membrane protein transmembrane segment spans residues 2–22; that stretch reads LPKTLTIWASLASLAVAQSGQ. At 23–747 the chain is on the vacuolar side; sequence VVFAKNADGK…AEYLEEPDDD (725 aa). Residues N134, N191, and N463 are each glycosylated (N-linked (GlcNAc...) asparagine). The segment at 570 to 640 is disordered; it reads AVATSSEPES…PKFPKDLQPG (71 aa). Positions 577 to 586 are enriched in acidic residues; it reads PESDDYDSDL. The span at 591-625 shows a compositional bias: basic residues; the sequence is KKGKKKGKKGKKGKKGKKGKKKKGKKGKKGKKGKR. A compositionally biased stretch (basic and acidic residues) spans 626-635; it reads DKSMPPKFPK. N-linked (GlcNAc...) asparagine glycosylation is present at N659.

This sequence belongs to the endopolyphosphatase PPN1 family. Requires a divalent metal cation as cofactor. Post-translationally, processing by proteases in the vacuole may be required for activation.

The protein localises to the vacuole membrane. The enzyme catalyses [phosphate](n+1) + n H2O = (n+1) phosphate + n H(+). Functionally, catalyzes the hydrolysis of inorganic polyphosphate (polyP) chains of many hundreds of phosphate residues into shorter lengths. In Yarrowia lipolytica (strain CLIB 122 / E 150) (Yeast), this protein is Endopolyphosphatase (PPN1).